A 164-amino-acid polypeptide reads, in one-letter code: UPF0251 protein MA_0157 (164 aa).

The tract at residues 91–124 is disordered; it reads GDYRMPRGDGTGPAGQGPVGGGRSRGQGKGRGGR. The span at 99–115 shows a compositional bias: gly residues; it reads DGTGPAGQGPVGGGRSR.

The protein belongs to the UPF0251 family.

In Methanosarcina acetivorans (strain ATCC 35395 / DSM 2834 / JCM 12185 / C2A), this protein is UPF0251 protein MA_0157.